The following is a 256-amino-acid chain: Global transcriptional regulator CodY (256 aa).

The tract at residues 1–155 (MSLLSKTREL…AATVIGMEIL (155 aa)) is GAF domain. The H-T-H motif DNA-binding region spans 203–222 (ASKVADRVGITRSVIVNALR).

Belongs to the CodY family.

It is found in the cytoplasm. Its function is as follows. DNA-binding global transcriptional regulator which is involved in the adaptive response to starvation and acts by directly or indirectly controlling the expression of numerous genes in response to nutrient availability. During rapid exponential growth, CodY is highly active and represses genes whose products allow adaptation to nutrient depletion. This chain is Global transcriptional regulator CodY, found in Staphylococcus epidermidis (strain ATCC 35984 / DSM 28319 / BCRC 17069 / CCUG 31568 / BM 3577 / RP62A).